Reading from the N-terminus, the 688-residue chain is Glycine--tRNA ligase beta subunit (688 aa).

It belongs to the class-II aminoacyl-tRNA synthetase family. As to quaternary structure, tetramer of two alpha and two beta subunits.

It localises to the cytoplasm. It carries out the reaction tRNA(Gly) + glycine + ATP = glycyl-tRNA(Gly) + AMP + diphosphate. This Shewanella oneidensis (strain ATCC 700550 / JCM 31522 / CIP 106686 / LMG 19005 / NCIMB 14063 / MR-1) protein is Glycine--tRNA ligase beta subunit.